The following is a 185-amino-acid chain: Elongation factor P (185 aa).

The protein belongs to the elongation factor P family.

It localises to the cytoplasm. It participates in protein biosynthesis; polypeptide chain elongation. Functionally, involved in peptide bond synthesis. Stimulates efficient translation and peptide-bond synthesis on native or reconstituted 70S ribosomes in vitro. Probably functions indirectly by altering the affinity of the ribosome for aminoacyl-tRNA, thus increasing their reactivity as acceptors for peptidyl transferase. The polypeptide is Elongation factor P (Bacillus mycoides (strain KBAB4) (Bacillus weihenstephanensis)).